Reading from the N-terminus, the 71-residue chain is Small ribosomal subunit protein bS18 (71 aa).

This sequence belongs to the bacterial ribosomal protein bS18 family. In terms of assembly, part of the 30S ribosomal subunit. Forms a tight heterodimer with protein bS6.

Its function is as follows. Binds as a heterodimer with protein bS6 to the central domain of the 16S rRNA, where it helps stabilize the platform of the 30S subunit. The polypeptide is Small ribosomal subunit protein bS18 (Synechococcus sp. (strain JA-2-3B'a(2-13)) (Cyanobacteria bacterium Yellowstone B-Prime)).